A 332-amino-acid polypeptide reads, in one-letter code: Adenosine receptor A2b (332 aa).

The Extracellular segment spans residues 1 to 8; sequence MQLETQDA. The chain crosses the membrane as a helical span at residues 9 to 33; the sequence is LYVALELAIAALSVAGNVLVCAAVG. Topologically, residues 34-43 are cytoplasmic; the sequence is TSSALQTPTN. The chain crosses the membrane as a helical span at residues 44-67; sequence YFLVSLAAADVAVGLFAIPFAITI. The Extracellular portion of the chain corresponds to 68 to 78; that stretch reads SLGFCTDFHSC. Cys-78 and Cys-170 are disulfide-bonded. The helical transmembrane segment at 79–101 threads the bilayer; it reads LFLACFVLVLTQSSIFSLLAVAV. The Cytoplasmic segment spans residues 102 to 121; that stretch reads DRYLAIRVPLRYKSLVTGTR. The helical transmembrane segment at 122–144 threads the bilayer; sequence ARGVIAVLWVLAFGIGLTPFLGW. Residues 145–177 lie on the Extracellular side of the membrane; the sequence is NSKDSATNCTEPWDGTTNESCCLVKCLFENVVP. Asn-152 and Asn-162 each carry an N-linked (GlcNAc...) asparagine glycan. Position 173 (Glu-173) interacts with adenosine. A helical transmembrane segment spans residues 178–202; the sequence is MSYMVYFNFFGCVLPPLLIMLVIYI. Over 203–234 the chain is Cytoplasmic; it reads KIFMVACKQLQRTELVDHSRTVIQREIHAAKS. A helical transmembrane segment spans residues 235 to 258; sequence LAMIVGIFALCWLPVHAINCVTLF. Asn-253 is a binding site for adenosine. Residues 259–266 are Extracellular-facing; it reads QPARAKDK. A helical transmembrane segment spans residues 267–290; it reads PKWAMNMAILLSHASSVVNPIVYA. The adenosine site is built by Ser-278 and His-279. Topologically, residues 291-332 are cytoplasmic; sequence YRNRDFRYTFHKIISRYVLCQTDVLKSGNGQAGTQSALDVGL. Cys-310 is lipidated: S-palmitoyl cysteine.

Belongs to the G-protein coupled receptor 1 family.

It localises to the cell membrane. Functionally, receptor for adenosine. The activity of this receptor is mediated by G proteins which activate adenylyl cyclase. In Canis lupus familiaris (Dog), this protein is Adenosine receptor A2b (ADORA2B).